Here is a 159-residue protein sequence, read N- to C-terminus: Ribosomal RNA large subunit methyltransferase H (159 aa).

S-adenosyl-L-methionine is bound by residues leucine 76, glycine 108, and 127-132; that span reads LSKMTF.

Belongs to the RNA methyltransferase RlmH family. In terms of assembly, homodimer.

The protein localises to the cytoplasm. The catalysed reaction is pseudouridine(1915) in 23S rRNA + S-adenosyl-L-methionine = N(3)-methylpseudouridine(1915) in 23S rRNA + S-adenosyl-L-homocysteine + H(+). Specifically methylates the pseudouridine at position 1915 (m3Psi1915) in 23S rRNA. This is Ribosomal RNA large subunit methyltransferase H from Ureaplasma urealyticum serovar 10 (strain ATCC 33699 / Western).